The primary structure comprises 192 residues: Riboflavin kinase (192 aa).

Positions 47 and 49 each coordinate Mg(2+). The Nucleophile role is filled by Glu-129.

It belongs to the flavokinase family. The cofactor is Zn(2+). Mg(2+) is required as a cofactor.

The catalysed reaction is riboflavin + ATP = FMN + ADP + H(+). It participates in cofactor biosynthesis; FMN biosynthesis; FMN from riboflavin (ATP route): step 1/1. In terms of biological role, catalyzes the phosphorylation of riboflavin (vitamin B2) to form flavin mononucleotide (FMN) coenzyme. The sequence is that of Riboflavin kinase (FMN1) from Yarrowia lipolytica (strain CLIB 122 / E 150) (Yeast).